Reading from the N-terminus, the 610-residue chain is DEAD-box ATP-dependent RNA helicase 9, mitochondrial (610 aa).

A mitochondrion-targeting transit peptide spans 1–66; the sequence is MISTVLRRSI…SSPFGVKVRD (66 aa). The short motif at 116–144 is the Q motif element; that stretch reads LAIADLGISPEIVKALKGRGIEKLFPIQK. One can recognise a Helicase ATP-binding domain in the interval 147 to 321; it reads LEPAMEGRDM…KKYLNNPLTI (175 aa). 160-167 is an ATP binding site; that stretch reads ARTGTGKT. The DEAD box motif lies at 269–272; it reads DEAD. The Helicase C-terminal domain maps to 350-494; it reads IIGPLVKEHG…ELPSIAVERG (145 aa). Gly residues predominate over residues 542-557; the sequence is SGRSGGGGGSYGGSGG. Residues 542 to 610 form a disordered region; sequence SGRSGGGGGS…FGSNDGKRSY (69 aa). Positions 558–572 are enriched in low complexity; the sequence is SSSRYSGGSDRSSGF. Residues 573–585 show a composition bias toward gly residues; sequence GSFGSGGSSGGFG. Over residues 586–596 the composition is skewed to low complexity; sequence SDRSSQSSGRS.

The protein belongs to the DEAD box helicase family. DDX21/DDX50 subfamily.

The protein localises to the mitochondrion. It catalyses the reaction ATP + H2O = ADP + phosphate + H(+). This Arabidopsis thaliana (Mouse-ear cress) protein is DEAD-box ATP-dependent RNA helicase 9, mitochondrial (RH9).